Reading from the N-terminus, the 132-residue chain is Large ribosomal subunit protein uL14 (132 aa).

This sequence belongs to the universal ribosomal protein uL14 family. In terms of assembly, part of the 50S ribosomal subunit. Forms a cluster with proteins L3 and L24e, part of which may contact the 16S rRNA in 2 intersubunit bridges.

Binds to 23S rRNA. Forms part of two intersubunit bridges in the 70S ribosome. This is Large ribosomal subunit protein uL14 from Methanosarcina barkeri (strain Fusaro / DSM 804).